The primary structure comprises 270 residues: Large ribosomal subunit protein uL30 (270 aa).

At M1 the chain carries N-acetylmethionine. 6 consecutive repeat copies span residues 7–18, 19–29, 30–40, 41–52, 53–64, and 65–76. The segment at 7–76 is 6 X 12 AA tandem repeats; sequence KKKKVATVPG…ARRKLIYEKA (70 aa). Phosphothreonine is present on T39. K146 is subject to N6-acetyllysine. Position 149 is an N6-succinyllysine (K149). Position 161 is a phosphotyrosine (Y161).

It belongs to the universal ribosomal protein uL30 family. Component of the large ribosomal subunit. Homodimer. Interacts with DHX33.

The protein resides in the cytoplasm. In terms of biological role, component of the large ribosomal subunit. The ribosome is a large ribonucleoprotein complex responsible for the synthesis of proteins in the cell. Binds to G-rich structures in 28S rRNA and in mRNAs. Plays a regulatory role in the translation apparatus; inhibits cell-free translation of mRNAs. The protein is Large ribosomal subunit protein uL30 (Rpl7) of Mus musculus (Mouse).